The chain runs to 396 residues: Ornithine aminotransferase (396 aa).

K255 is subject to N6-(pyridoxal phosphate)lysine.

This sequence belongs to the class-III pyridoxal-phosphate-dependent aminotransferase family. OAT subfamily. It depends on pyridoxal 5'-phosphate as a cofactor.

It is found in the cytoplasm. It catalyses the reaction a 2-oxocarboxylate + L-ornithine = L-glutamate 5-semialdehyde + an L-alpha-amino acid. The protein operates within amino-acid biosynthesis; L-proline biosynthesis; L-glutamate 5-semialdehyde from L-ornithine: step 1/1. Functionally, catalyzes the interconversion of ornithine to glutamate semialdehyde. This chain is Ornithine aminotransferase, found in Bacillus cereus (strain Q1).